Here is a 778-residue protein sequence, read N- to C-terminus: MSKRKLIPKLSIQSPVLHTNLNVQSTHPPLKKEDLHRISKDSLESDSESLTQEIMCHSEFDDRIRGNGMEPDSLDEEESPRWGSLHEMEEEASGKAAQMAREQNHHTWDQGANNRQQPIEDKYSDLRYDPNWKSKKEEGQLLSVEALPESTDSSLENLPLAPLYPSQETSMELSGGKGEQKESPQSAASLLGSEFLSPNYEHGARRSKPFSELSDSDLEEKSSSLSPYVKSSSSHNEVFLPGSRGPRRRKSKQHFVEKNKLTLGLPTPKTDSYLQLHNKKRGESHPEQISYPVRVTDKTSIQNAKEMENAAIDPEDKWHQRAQQLKNYQEHWSQYESTKSSNVPRGQPSDMVNDHQPSRRPAKLKIRKQCKHQNGLKSSTTEEVTASQGNQNNPPRQQQNQNKPLDTSTKPESIVIMHASNNDVQASRALRSHNLKETSNTFAPPKQAFDKVLSKNSTGCDSGLNVNKERGHKDQEEKRFSYQQLHTLSDMDLNNLNELSKRHVLLSQKGSQFVYHINTHGSTKNKKQLKQPYTETKYRNLEMLWKFHSSSDSQTVRASPDSWLTQIMEQHQQALVQLTDVQPSEGALSSVTLPPILSRVESESQLSSERSQRNQVKISRSNSEGYLFQLEKGKKHKKRSSSKNTKLKGYQKRDVKLGGLGPDFESIRDKTQKLIQQKEYAKQVKEYNMKTLSILSKPQTEKTQKKSAIPRQKALEYAKTIPKPKPSNLTHQASKEQKNPTYAGKEESLPEISLLEILQNRHEREKQAVAAFKVLHIV.

4 disordered regions span residues 62–271, 334–408, 631–654, and 721–746; these read DRIR…PKTD, QYES…LDTS, EKGK…QKRD, and IPKP…AGKE. Over residues 118–139 the composition is skewed to basic and acidic residues; the sequence is PIEDKYSDLRYDPNWKSKKEEG. The segment covering 223-234 has biased composition (low complexity); the sequence is SSLSPYVKSSSS. Residues 334–344 are compositionally biased toward polar residues; it reads QYESTKSSNVP. The segment covering 358–371 has biased composition (basic residues); it reads SRRPAKLKIRKQCK. Residues 375-389 show a composition bias toward polar residues; sequence GLKSSTTEEVTASQG. Over residues 390–402 the composition is skewed to low complexity; sequence NQNNPPRQQQNQN. Over residues 633–650 the composition is skewed to basic residues; it reads GKKHKKRSSSKNTKLKGY. Residues 733–746 are compositionally biased toward basic and acidic residues; that stretch reads ASKEQKNPTYAGKE.

Its function is as follows. Required for the normal development of cilia in brain ependymal cells lining the ventricular surfaces. The sequence is that of Jhy protein homolog from Homo sapiens (Human).